The sequence spans 82 residues: Small ribosomal subunit protein uS17 (82 aa).

It belongs to the universal ribosomal protein uS17 family. In terms of assembly, part of the 30S ribosomal subunit.

Its function is as follows. One of the primary rRNA binding proteins, it binds specifically to the 5'-end of 16S ribosomal RNA. This is Small ribosomal subunit protein uS17 from Shewanella sp. (strain W3-18-1).